Consider the following 1307-residue polypeptide: Cyclic nucleotide-gated channel beta-1 (1307 aa).

Disordered stretches follow at residues 1–101 (MLGW…AQVA), 126–178 (QPVY…TEPS), 193–262 (LPQP…PGDP), 320–458 (DSCW…LDSC), 470–625 (LERA…SQNS), and 648–681 (EKLI…KPAE). The Cytoplasmic segment spans residues 1-720 (MLGWVQRVLP…SIDPLTNLMY (720 aa)). The segment covering 43–59 (VQPEPEPEPEPAPEEAA) has biased composition (acidic residues). Residues 165–174 (GSDKTSKTQD) are compositionally biased toward basic and acidic residues. Residues 361–386 (QEEEEEEKEEKEEKEEEEEKEEEEKR) are compositionally biased toward acidic residues. The span at 387-406 (EEEKKKEKEEEKKEKEKEEK) shows a compositional bias: basic and acidic residues. Composition is skewed to acidic residues over residues 407-451 (EEKE…EEEP) and 483-518 (LPEE…EEGE). Residues 550 to 560 (TIPPPERPPVS) are compositionally biased toward pro residues. The segment at 621–631 (ASQNSAIINDR) is calmodulin-binding CaM1. The chain crosses the membrane as a helical span at residues 721–742 (ILWLFFVVLAWNWNCWLIPVRW). The Extracellular segment spans residues 743–751 (AFPYQRADN). The helical transmembrane segment at 752 to 773 (IHLWLLMDYLCDFIYLLDITVF) threads the bilayer. Residues 774–788 (QMRLQFVKGGDIITD) lie on the Cytoplasmic side of the membrane. A helical membrane pass occupies residues 789 to 808 (KKEMRNNYLKSQRFKMDLLC). Over 809–824 (LLPLDFLYLKLGVNPL) the chain is Extracellular. Residues 825 to 837 (LRLPRCLKYMAFF) form a helical membrane-spanning segment. Residues 838-849 (EFNNRLEAILSK) lie on the Cytoplasmic side of the membrane. A helical transmembrane segment spans residues 850–872 (AYVYRVIRTTAYLLYSLHLNSCL). The interval 850–949 (AYVYRVIRTT…IGQMRDVVGA (100 aa)) is ion conduction pathway. The Extracellular portion of the chain corresponds to 873–895 (YYWASAFQGIGSTHWVYDGVGNS). 2 helical membrane passes run 896–922 (YIRC…LFEI) and 923–948 (VFQL…DVVG). At 949-1307 (AATAGQTYYR…MLEEKKEEVE (359 aa)) the chain is on the cytoplasmic side. A C-linker region spans residues 952-1028 (AGQTYYRSCM…NIVSKVALFQ (77 aa)). The interval 1026 to 1130 (LFQGCDRQMI…LDKKDLNEIL (105 aa)) is cNMP-binding domain. The cyclic nucleotide-binding domain stretch occupies residues 1032 to 1148 (RQMIFDMLKR…LLRKKARRML (117 aa)). Residues G1093, E1094, S1096, R1106, and T1107 each coordinate 3',5'-cyclic GMP. R1106 lines the 3',5'-cyclic AMP pocket. The segment at 1212-1218 (QQQLLEQ) is calmodulin-binding CaM2. Positions 1214-1238 (QLLEQAKSSQEAGGEEGSGATDQPA) are enriched in low complexity. Residues 1214–1307 (QLLEQAKSSQ…MLEEKKEEVE (94 aa)) are disordered. Over residues 1250 to 1261 (EPPAPSSPPPAS) the composition is skewed to pro residues.

The protein belongs to the cyclic nucleotide-gated cation channel (TC 1.A.1.5) family. CNGB1 subfamily. The rod cyclic nucleotide-gated channel is a heterotetramer composed of CNGA1 and CNGB1 subunits with 3:1 stoichiometry. CNGA1:CNGB1 channel binds Ca(2+)-bound CALM1 via CaM1 and CaM2 regions of the CNGB1 subunit; this interaction modulates the affinity of the channel for cNMPs in response to intracellular Ca(2+) levels. In terms of assembly, the olfactory cyclic nucleotide-gated channel is a heterotetramer composed of CNGA2, CNGA4 and CNGB1b subunits with 2:1:1 stoichiometry. In terms of tissue distribution, expressed in olfactory sensory cilia (at protein level).

It is found in the cell projection. The protein localises to the cilium membrane. It carries out the reaction Ca(2+)(in) = Ca(2+)(out). The enzyme catalyses Na(+)(in) = Na(+)(out). The catalysed reaction is K(+)(in) = K(+)(out). It catalyses the reaction NH4(+)(in) = NH4(+)(out). It carries out the reaction Rb(+)(in) = Rb(+)(out). The enzyme catalyses Li(+)(in) = Li(+)(out). The catalysed reaction is Cs(+)(in) = Cs(+)(out). Its function is as follows. Pore-forming subunit of the rod cyclic nucleotide-gated channel. Mediates rod photoresponses at dim light converting transient changes in intracellular cGMP levels into electrical signals. In the dark, cGMP levels are high and keep the channel open enabling a steady inward current carried by Na(+) and Ca(2+) ions that leads to membrane depolarization and neurotransmitter release from synaptic terminals. Upon photon absorption cGMP levels decline leading to channel closure and membrane hyperpolarization that ultimately slows neurotransmitter release and signals the presence of light, the end point of the phototransduction cascade. Conducts cGMP- and cAMP-gated ion currents, with permeability for monovalent and divalent cations. The selectivity for Ca(2+) over Na(+) increases with cGMP concentrations, whereas the selectivity among monovalent ions is independent of the cGMP levels. In terms of biological role, pore-forming subunit of the olfactory cyclic nucleotide-gated channel. Operates in the cilia of olfactory sensory neurons where chemical stimulation of the odorant is converted to an electrical signal. Mediates odorant-induced cAMP-dependent Ca(2+) influx triggering neuron depolarization. The rise of intracellular Ca(2+) levels potentiates the olfactory response by activating Ca(2+)-dependent Cl(-) channels, but it also serves as a negative feedback signal to desensitize the channel for rapid adaptation to odorants. The chain is Cyclic nucleotide-gated channel beta-1 from Rattus norvegicus (Rat).